Consider the following 130-residue polypeptide: Large ribosomal subunit protein bL19 (130 aa).

This sequence belongs to the bacterial ribosomal protein bL19 family.

Functionally, this protein is located at the 30S-50S ribosomal subunit interface and may play a role in the structure and function of the aminoacyl-tRNA binding site. This Cupriavidus taiwanensis (strain DSM 17343 / BCRC 17206 / CCUG 44338 / CIP 107171 / LMG 19424 / R1) (Ralstonia taiwanensis (strain LMG 19424)) protein is Large ribosomal subunit protein bL19.